The sequence spans 504 residues: Acetylcholine receptor subunit epsilon (504 aa).

The first 19 residues, 1–19, serve as a signal peptide directing secretion; that stretch reads MESGVRILSLLILLHNSLA. Residues 20 to 240 are Extracellular-facing; that stretch reads SESEESRLIK…IVFNLIIQRK (221 aa). N-linked (GlcNAc...) asparagine glycosylation is found at Asn-88 and Asn-161. A disulfide bridge links Cys-148 with Cys-162. The helical transmembrane segment at 241 to 265 threads the bilayer; the sequence is PLFYIINIIVPCVLISFLVVLVYFL. The Cytoplasmic segment spans residues 266 to 273; it reads PAKAGGQK. Residues 274-292 traverse the membrane as a helical segment; that stretch reads CTVSISVLLAQTVFLFLIA. Topologically, residues 293–307 are extracellular; that stretch reads QMVPETSLSVPLIGK. The helical transmembrane segment at 308 to 329 threads the bilayer; sequence YLMFVMFVSTLIVLSCVIVLNV. The Cytoplasmic portion of the chain corresponds to 330–473; that stretch reads SLRSPSTHNL…WILIGKVLDV (144 aa). The helical transmembrane segment at 474–497 threads the bilayer; sequence LCFWVALPLFVLGTLAIFLMGHFN. At 498–504 the chain is on the extracellular side; sequence TAPEHPF.

The protein belongs to the ligand-gated ion channel (TC 1.A.9) family. Acetylcholine receptor (TC 1.A.9.1) subfamily. Epsilon/CHRNE sub-subfamily. As to quaternary structure, pentamer of two alpha chains, and one each of the beta, delta, and gamma (in immature muscle) or epsilon (in mature muscle) chains.

The protein localises to the postsynaptic cell membrane. The protein resides in the cell membrane. It catalyses the reaction K(+)(in) = K(+)(out). The catalysed reaction is Na(+)(in) = Na(+)(out). Functionally, after binding acetylcholine, the AChR responds by an extensive change in conformation that affects all subunits and leads to opening of an ion-conducting channel across the plasma membrane. In Xenopus laevis (African clawed frog), this protein is Acetylcholine receptor subunit epsilon (chrne).